A 529-amino-acid chain; its full sequence is Glucose transporter 2A (529 aa).

The segment at 1 to 22 (MTERRDNVSHAPDAIEGPNDGA) is disordered. Residues 1–43 (MTERRDNVSHAPDAIEGPNDGAHAEDTSPGFFSFENLGVAQVQ) are Cytoplasmic-facing. Residues 44–64 (VVGGTLNGFSIGFVAVYILLY) traverse the membrane as a helical segment. Over 65 to 119 (EVATNCSLFKTTEACKAVGSYGCEWKDTEVCSWKKECDSDSDGVNPCESLIGYSS) the chain is Extracellular. Residues 120-140 (LYSGIFASAMIVGSMVGSIIA) form a helical membrane-spanning segment. Residues 141 to 152 (GKCITMFGLKKS) are Cytoplasmic-facing. The helical transmembrane segment at 153–173 (FIIVGVMSVVASALNHISVAT) threads the bilayer. Residues 174–175 (NE) lie on the Extracellular side of the membrane. The helical transmembrane segment at 176 to 196 (FWVLCAGRVLMGIGLGVVCVI) threads the bilayer. Over 197-214 (CPMYVNENAHPKLSKVDG) the chain is Cytoplasmic. Residues 215-235 (VLFQVFITFGIMLAAMLGLIL) traverse the membrane as a helical segment. At 236–250 (DKTVNYDNDPDMAGR) the chain is on the extracellular side. Residues 251–271 (FHGFCAVSSVLSVAMFLVGMF) form a helical membrane-spanning segment. Residues 272–300 (LRESTATFSQDDDGKADGGMDPNEYGWGQ) lie on the Cytoplasmic side of the membrane. Residues 301-321 (MLWPLFMGAVTAGTLQLTGIN) traverse the membrane as a helical segment. Over 322 to 339 (AVMNYAPKITENLGMDPS) the chain is Extracellular. The chain crosses the membrane as a helical span at residues 340 to 360 (LGNFLVMAWNFVTSLVAIPLA). Residues 361 to 368 (SRFTMRQM) lie on the Cytoplasmic side of the membrane. Residues 369 to 389 (FITCSFVASCMCLFLCGIPVF) traverse the membrane as a helical segment. Topologically, residues 390–404 (PGVAEEKVKNGVATT) are extracellular. A helical transmembrane segment spans residues 405–425 (GIALFIAAFEFGVGSCFFVLA). Residues 426–439 (QDLFPPSFRPKGSS) lie on the Cytoplasmic side of the membrane. The helical transmembrane segment at 440–460 (FVVMMQFIFNILINLLYPITT) threads the bilayer. Over 461 to 476 (EAISGGATGDQDKGQA) the chain is Extracellular. A helical membrane pass occupies residues 477 to 497 (VVFILFGLIGLICFVLQFFYL). Over 498-529 (YPYDANQDHENDHGTEPVERILSPVDVPTPRN) the chain is Cytoplasmic. The disordered stretch occupies residues 508-529 (NDHGTEPVERILSPVDVPTPRN).

The protein belongs to the major facilitator superfamily. Sugar transporter (TC 2.A.1.1) family.

The protein localises to the membrane. Its function is as follows. Facilitative glucose transporter. This chain is Glucose transporter 2A (THT2A), found in Trypanosoma brucei brucei.